Consider the following 365-residue polypeptide: uncharacterized protein (365 aa).

Position 29-36 (29-36 (GPLNSGKS)) interacts with ATP.

Belongs to the archaeal ATPase family.

This is an uncharacterized protein from Methanocaldococcus jannaschii (strain ATCC 43067 / DSM 2661 / JAL-1 / JCM 10045 / NBRC 100440) (Methanococcus jannaschii).